The sequence spans 479 residues: GTPase Der (479 aa).

2 consecutive EngA-type G domains span residues 3–167 and 191–366; these read FTLA…EAAA and LQIA…ATWN. GTP-binding positions include 9–16, 56–60, 119–122, 197–204, 244–248, and 309–312; these read GRPNVGKS, DTAGL, NKAE, GRPNAGKS, DTAGM, and NKWD. A KH-like domain is found at 367-453; it reads TRISTARLNQ…RLWMRSQADD (87 aa). Residues 449 to 479 form a disordered region; it reads SQADDNPYKNRKKSTPSRLNKHVRKGETKKG. Basic residues predominate over residues 457–472; it reads KNRKKSTPSRLNKHVR.

The protein belongs to the TRAFAC class TrmE-Era-EngA-EngB-Septin-like GTPase superfamily. EngA (Der) GTPase family. Associates with the 50S ribosomal subunit.

GTPase that plays an essential role in the late steps of ribosome biogenesis. The polypeptide is GTPase Der (Jannaschia sp. (strain CCS1)).